The primary structure comprises 333 residues: Homeobox protein engrailed-2 (333 aa).

Disordered regions lie at residues 1 to 49 (MEEN…RALM), 95 to 206 (GRGG…GANL), and 223 to 250 (SDRPSSGPRSRKPKKKNPNKEDKRPRTA). 2 stretches are compositionally biased toward gly residues: residues 25-36 (PGGGSGGGGGSS) and 95-117 (GRGGGAGGEGGASGAEGGGGAGG). Composition is skewed to low complexity over residues 142 to 151 (PLPAAGSDSP) and 191 to 200 (LSVSSDSDSS). The segment at residues 244-303 (DKRPRTAFTAEQLQRLKAEFQTNRYLTEQRRQSLAQELSLNESQIKIWFQNKRAKIKKAT) is a DNA-binding region (homeobox).

It belongs to the engrailed homeobox family.

It localises to the nucleus. The polypeptide is Homeobox protein engrailed-2 (EN2) (Homo sapiens (Human)).